The primary structure comprises 410 residues: 2-hydroxy-5-methyl-1-naphthoate 7-hydroxylase (410 aa).

C350 is a binding site for heme.

The protein belongs to the cytochrome P450 family. Heme is required as a cofactor.

The enzyme catalyses 2-hydroxy-5-methyl-1-naphthoate + 2 reduced [2Fe-2S]-[ferredoxin] + O2 + 2 H(+) = 2,7-dihydroxy-5-methyl-1-naphthoate + 2 oxidized [2Fe-2S]-[ferredoxin] + H2O. Its pathway is antibiotic biosynthesis. In terms of biological role, involved in the biosynthesis of the naphthoic acid (NA) moiety in the chromophore of the enedyine antitumor antibiotic neocarzinostatin (NCS). Catalyzes the hydroxylation at C-7 position of 2-hydroxy-5-methyl-1-naphthoate to yield 2,7-dihydroxy-5-methyl-1-naphthoate. The protein is 2-hydroxy-5-methyl-1-naphthoate 7-hydroxylase of Streptomyces carzinostaticus.